Here is a 549-residue protein sequence, read N- to C-terminus: Glucose-6-phosphate isomerase (549 aa).

The active-site Proton donor is the E355. Residues H386 and K514 contribute to the active site.

This sequence belongs to the GPI family.

It is found in the cytoplasm. It catalyses the reaction alpha-D-glucose 6-phosphate = beta-D-fructose 6-phosphate. Its pathway is carbohydrate biosynthesis; gluconeogenesis. It functions in the pathway carbohydrate degradation; glycolysis; D-glyceraldehyde 3-phosphate and glycerone phosphate from D-glucose: step 2/4. In terms of biological role, catalyzes the reversible isomerization of glucose-6-phosphate to fructose-6-phosphate. This is Glucose-6-phosphate isomerase from Desulfatibacillum aliphaticivorans.